A 263-amino-acid polypeptide reads, in one-letter code: N-glycosylase/DNA lyase (263 aa).

The 8-oxoguanine site is built by glutamine 43, serine 71, and tryptophan 82. Residues 139–204 (RRYYFENMMG…EDVRIKAYTE (66 aa)) form a helix-hairpin-helix region. The active-site Schiff-base intermediate with DNA is the lysine 164. The 8-oxoguanine site is built by phenylalanine 168 and proline 194. Aspartate 196 is an active-site residue. 8-oxoguanine contacts are provided by aspartate 230 and tryptophan 234.

Belongs to the archaeal N-glycosylase/DNA lyase (AGOG) family.

The enzyme catalyses 2'-deoxyribonucleotide-(2'-deoxyribose 5'-phosphate)-2'-deoxyribonucleotide-DNA = a 3'-end 2'-deoxyribonucleotide-(2,3-dehydro-2,3-deoxyribose 5'-phosphate)-DNA + a 5'-end 5'-phospho-2'-deoxyribonucleoside-DNA + H(+). Functionally, DNA repair enzyme that is part of the base excision repair (BER) pathway; protects from oxidative damage by removing the major product of DNA oxidation, 8-oxoguanine (GO), from single- and double-stranded DNA substrates. The chain is N-glycosylase/DNA lyase from Thermococcus kodakarensis (strain ATCC BAA-918 / JCM 12380 / KOD1) (Pyrococcus kodakaraensis (strain KOD1)).